Here is a 232-residue protein sequence, read N- to C-terminus: Ubiquinone biosynthesis O-methyltransferase (232 aa).

S-adenosyl-L-methionine is bound by residues R36, G55, D76, and M120.

The protein belongs to the methyltransferase superfamily. UbiG/COQ3 family.

It catalyses the reaction a 3-demethylubiquinol + S-adenosyl-L-methionine = a ubiquinol + S-adenosyl-L-homocysteine + H(+). The enzyme catalyses a 3-(all-trans-polyprenyl)benzene-1,2-diol + S-adenosyl-L-methionine = a 2-methoxy-6-(all-trans-polyprenyl)phenol + S-adenosyl-L-homocysteine + H(+). It functions in the pathway cofactor biosynthesis; ubiquinone biosynthesis. Its function is as follows. O-methyltransferase that catalyzes the 2 O-methylation steps in the ubiquinone biosynthetic pathway. This chain is Ubiquinone biosynthesis O-methyltransferase, found in Paraburkholderia phytofirmans (strain DSM 17436 / LMG 22146 / PsJN) (Burkholderia phytofirmans).